Reading from the N-terminus, the 132-residue chain is uncharacterized protein (132 aa).

The region spanning 1 to 69 (MNIGEAAKKS…LDEVGKLLTL (69 aa)) is the HTH merR-type domain. Positions 4 to 23 (GEAAKKSGLTPKMIRYYESI) form a DNA-binding region, H-T-H motif.

Its subcellular location is the cytoplasm. This is an uncharacterized protein from Pseudomonas aeruginosa (strain ATCC 15692 / DSM 22644 / CIP 104116 / JCM 14847 / LMG 12228 / 1C / PRS 101 / PAO1).